The following is a 146-amino-acid chain: Snaclec coagulation factor IX/factor X-binding protein subunit B2 (146 aa).

Residues 1 to 23 form the signal peptide; it reads MGRLIFVSFGLLVVFLSLSGTAA. 3 disulfides stabilise this stretch: Cys-25/Cys-36, Cys-53/Cys-142, and Cys-119/Cys-134. In terms of domain architecture, C-type lectin spans 32-143; the sequence is YEGHCYKPFN…CRMMANFVCE (112 aa).

Belongs to the snaclec family. Heterodimer of subunits A and B2; disulfide-linked. As to expression, expressed by the venom gland.

The protein localises to the secreted. Anticoagulant protein which binds to the gamma-carboxyglutamic acid-domain regions of factors IX (F9) and factor X (F10) in the presence of calcium with a 1 to 1 stoichiometry. The protein is Snaclec coagulation factor IX/factor X-binding protein subunit B2 of Trimeresurus stejnegeri (Chinese green tree viper).